The sequence spans 338 residues: Magnesium-chelatase subunit ChlI (338 aa).

11–18 (GDRGTGKS) is an ATP binding site.

Belongs to the Mg-chelatase subunits D/I family.

It carries out the reaction protoporphyrin IX + Mg(2+) + ATP + H2O = Mg-protoporphyrin IX + ADP + phosphate + 3 H(+). It functions in the pathway porphyrin-containing compound metabolism; chlorophyll biosynthesis. In terms of biological role, involved in chlorophyll biosynthesis; introduces a magnesium ion into protoporphyrin IX to yield Mg-protoporphyrin IX. This Anabaena variabilis protein is Magnesium-chelatase subunit ChlI (chlI).